Here is a 93-residue protein sequence, read N- to C-terminus: Alpha-elapitoxin-Oh2a (93 aa).

Residues 1 to 21 (MKTLLLTLVVVTIVCLDLGYT) form the signal peptide. 5 disulfides stabilise this stretch: Cys24–Cys43, Cys36–Cys64, Cys49–Cys53, Cys68–Cys79, and Cys80–Cys85.

The protein belongs to the three-finger toxin family. Long-chain subfamily. Type II alpha-neurotoxin sub-subfamily. In terms of tissue distribution, expressed by the venom gland.

The protein resides in the secreted. Functionally, binds with high affinity to muscular (alpha-1/CHRNA1) and neuronal (alpha-7/CHRNA7) nicotinic acetylcholine receptor (nAChR) and inhibits acetylcholine from binding to the receptor, thereby impairing neuromuscular and neuronal transmission. This is Alpha-elapitoxin-Oh2a from Ophiophagus hannah (King cobra).